We begin with the raw amino-acid sequence, 159 residues long: Phosphopantetheine adenylyltransferase (159 aa).

Thr-10 contributes to the substrate binding site. Residues 10 to 11 (TF) and His-18 contribute to the ATP site. 3 residues coordinate substrate: Lys-42, Leu-73, and Arg-87. Residues 88–90 (GLR), Glu-98, and 123–129 (YSYVSGT) contribute to the ATP site.

It belongs to the bacterial CoaD family. Homohexamer. The cofactor is Mg(2+).

It is found in the cytoplasm. The enzyme catalyses (R)-4'-phosphopantetheine + ATP + H(+) = 3'-dephospho-CoA + diphosphate. Its pathway is cofactor biosynthesis; coenzyme A biosynthesis; CoA from (R)-pantothenate: step 4/5. Reversibly transfers an adenylyl group from ATP to 4'-phosphopantetheine, yielding dephospho-CoA (dPCoA) and pyrophosphate. The sequence is that of Phosphopantetheine adenylyltransferase from Coxiella burnetii (strain CbuK_Q154) (Coxiella burnetii (strain Q154)).